The following is an 893-amino-acid chain: UPF0182 protein CLB_0018 (893 aa).

7 consecutive transmembrane segments (helical) span residues 9–29 (IPLF…NFII), 49–69 (AIII…WMYY), 94–114 (LFFI…SSSY), 154–174 (VIIS…FILE), 202–222 (LAIV…IKIW), 246–266 (FYKI…LSIV), and 273–293 (VSIC…ASFL).

It belongs to the UPF0182 family.

Its subcellular location is the cell membrane. The sequence is that of UPF0182 protein CLB_0018 from Clostridium botulinum (strain ATCC 19397 / Type A).